We begin with the raw amino-acid sequence, 411 residues long: Arginine deiminase (411 aa).

The active-site Amidino-cysteine intermediate is the Cys401.

Belongs to the arginine deiminase family.

The protein resides in the cytoplasm. The catalysed reaction is L-arginine + H2O = L-citrulline + NH4(+). It functions in the pathway amino-acid degradation; L-arginine degradation via ADI pathway; carbamoyl phosphate from L-arginine: step 1/2. The protein is Arginine deiminase of Staphylococcus aureus (strain bovine RF122 / ET3-1).